The primary structure comprises 388 residues: Succinate--CoA ligase [ADP-forming] subunit beta (388 aa).

Positions 9-245 (KELLASYGLP…KSQENERELK (237 aa)) constitute an ATP-grasp domain. ATP-binding positions include lysine 46, 53–55 (GRG), glutamate 100, tyrosine 103, and glutamate 108. 2 residues coordinate Mg(2+): asparagine 200 and aspartate 214. Substrate contacts are provided by residues asparagine 265 and 322-324 (GIV).

Belongs to the succinate/malate CoA ligase beta subunit family. Heterotetramer of two alpha and two beta subunits. The cofactor is Mg(2+).

The catalysed reaction is succinate + ATP + CoA = succinyl-CoA + ADP + phosphate. It carries out the reaction GTP + succinate + CoA = succinyl-CoA + GDP + phosphate. It participates in carbohydrate metabolism; tricarboxylic acid cycle; succinate from succinyl-CoA (ligase route): step 1/1. Succinyl-CoA synthetase functions in the citric acid cycle (TCA), coupling the hydrolysis of succinyl-CoA to the synthesis of either ATP or GTP and thus represents the only step of substrate-level phosphorylation in the TCA. The beta subunit provides nucleotide specificity of the enzyme and binds the substrate succinate, while the binding sites for coenzyme A and phosphate are found in the alpha subunit. The sequence is that of Succinate--CoA ligase [ADP-forming] subunit beta from Neisseria gonorrhoeae (strain NCCP11945).